The primary structure comprises 164 residues: 3-isopropylmalate dehydratase small subunit (164 aa).

The protein belongs to the LeuD family. LeuD type 2 subfamily. As to quaternary structure, heterodimer of LeuC and LeuD.

The enzyme catalyses (2R,3S)-3-isopropylmalate = (2S)-2-isopropylmalate. It participates in amino-acid biosynthesis; L-leucine biosynthesis; L-leucine from 3-methyl-2-oxobutanoate: step 2/4. Catalyzes the isomerization between 2-isopropylmalate and 3-isopropylmalate, via the formation of 2-isopropylmaleate. The protein is 3-isopropylmalate dehydratase small subunit of Syntrophus aciditrophicus (strain SB).